We begin with the raw amino-acid sequence, 740 residues long: Polyribonucleotide nucleotidyltransferase (740 aa).

Residues Asp496 and Asp502 each coordinate Mg(2+). The region spanning 563 to 622 (PAIIRTSIHPDKIRDIIGPGGKIIKKLVEETGADIDIEDDGRVFIAAVDREKGKRALEII) is the KH domain. The S1 motif domain occupies 632–706 (GKLYNGKVTR…QQGRLKLSKK (75 aa)). Residues 707-740 (EAMRDMGLAPAESTSEQPEKRERRPFSRPKATKE) are disordered. Basic and acidic residues predominate over residues 723–740 (QPEKRERRPFSRPKATKE).

This sequence belongs to the polyribonucleotide nucleotidyltransferase family. The cofactor is Mg(2+).

It is found in the cytoplasm. The enzyme catalyses RNA(n+1) + phosphate = RNA(n) + a ribonucleoside 5'-diphosphate. In terms of biological role, involved in mRNA degradation. Catalyzes the phosphorolysis of single-stranded polyribonucleotides processively in the 3'- to 5'-direction. The sequence is that of Polyribonucleotide nucleotidyltransferase from Desulforamulus reducens (strain ATCC BAA-1160 / DSM 100696 / MI-1) (Desulfotomaculum reducens).